A 283-amino-acid polypeptide reads, in one-letter code: 1D-myo-inositol 2-acetamido-2-deoxy-alpha-D-glucopyranoside deacetylase (283 aa).

Zn(2+)-binding residues include histidine 15, aspartate 18, and histidine 150.

Belongs to the MshB deacetylase family. It depends on Zn(2+) as a cofactor.

It carries out the reaction 1D-myo-inositol 2-acetamido-2-deoxy-alpha-D-glucopyranoside + H2O = 1D-myo-inositol 2-amino-2-deoxy-alpha-D-glucopyranoside + acetate. Its function is as follows. Catalyzes the deacetylation of 1D-myo-inositol 2-acetamido-2-deoxy-alpha-D-glucopyranoside (GlcNAc-Ins) in the mycothiol biosynthesis pathway. The protein is 1D-myo-inositol 2-acetamido-2-deoxy-alpha-D-glucopyranoside deacetylase of Actinosynnema mirum (strain ATCC 29888 / DSM 43827 / JCM 3225 / NBRC 14064 / NCIMB 13271 / NRRL B-12336 / IMRU 3971 / 101).